The sequence spans 151 residues: Transcriptional regulator MraZ (151 aa).

2 SpoVT-AbrB domains span residues Ala-5–Glu-52 and Ala-81–Ala-124.

It belongs to the MraZ family. As to quaternary structure, forms oligomers.

It localises to the cytoplasm. The protein resides in the nucleoid. This chain is Transcriptional regulator MraZ, found in Pseudomonas savastanoi pv. phaseolicola (strain 1448A / Race 6) (Pseudomonas syringae pv. phaseolicola (strain 1448A / Race 6)).